Reading from the N-terminus, the 367-residue chain is Probable 7-methylxanthine methyltransferase 2 (367 aa).

Tyr20 provides a ligand contact to S-adenosyl-L-homocysteine. Thr27 contributes to the theobromine binding site. Residues Cys64, Gln69, Asp101, Leu102, Ser134, and Phe135 each contribute to the S-adenosyl-L-homocysteine site. The theobromine site is built by Tyr152, His155, and Trp156. Mg(2+) contacts are provided by Asn172, Asp258, Phe260, and Asn261. Residue Phe313 participates in theobromine binding.

Belongs to the methyltransferase superfamily. Type-7 methyltransferase family. The cofactor is Mg(2+).

The enzyme catalyses 7-methylxanthine + S-adenosyl-L-methionine = theobromine + S-adenosyl-L-homocysteine + H(+). Its pathway is alkaloid biosynthesis. In terms of biological role, involved in the biosynthesis of theobromine. This chain is Probable 7-methylxanthine methyltransferase 2, found in Theobroma cacao (Cacao).